A 282-amino-acid chain; its full sequence is UDP-3-O-acyl-N-acetylglucosamine deacetylase (282 aa).

3 residues coordinate Zn(2+): histidine 74, histidine 226, and aspartate 230. Residue histidine 253 is the Proton donor of the active site.

The protein belongs to the LpxC family. It depends on Zn(2+) as a cofactor.

The enzyme catalyses a UDP-3-O-[(3R)-3-hydroxyacyl]-N-acetyl-alpha-D-glucosamine + H2O = a UDP-3-O-[(3R)-3-hydroxyacyl]-alpha-D-glucosamine + acetate. Its pathway is glycolipid biosynthesis; lipid IV(A) biosynthesis; lipid IV(A) from (3R)-3-hydroxytetradecanoyl-[acyl-carrier-protein] and UDP-N-acetyl-alpha-D-glucosamine: step 2/6. Catalyzes the hydrolysis of UDP-3-O-myristoyl-N-acetylglucosamine to form UDP-3-O-myristoylglucosamine and acetate, the committed step in lipid A biosynthesis. The sequence is that of UDP-3-O-acyl-N-acetylglucosamine deacetylase from Aquifex aeolicus (strain VF5).